Reading from the N-terminus, the 225-residue chain is Glutathione S-transferase A (225 aa).

The GST N-terminal domain maps to 3–85; it reads KDMTLLWGSG…YLESQFKSQG (83 aa). Residue Arg-18 participates in glutathione binding. Residues 92–217 form the GST C-terminal domain; the sequence is CPAEQAMMYQ…WPPTWLESPQ (126 aa).

Belongs to the GST superfamily. Theta family. Homodimer. In terms of tissue distribution, found in all the tissues examined. Highest values found in liver and in intestinal mucosa.

Its subcellular location is the cytoplasm. The enzyme catalyses RX + glutathione = an S-substituted glutathione + a halide anion + H(+). Conjugation of reduced glutathione to a wide number of exogenous and endogenous hydrophobic electrophiles. This Pleuronectes platessa (European plaice) protein is Glutathione S-transferase A.